Reading from the N-terminus, the 360-residue chain is Phosphoserine aminotransferase (360 aa).

Arginine 41 provides a ligand contact to L-glutamate. Residues tryptophan 101, threonine 152, aspartate 172, and glutamine 195 each contribute to the pyridoxal 5'-phosphate site. Lysine 196 bears the N6-(pyridoxal phosphate)lysine mark. A pyridoxal 5'-phosphate-binding site is contributed by 237-238; the sequence is NT.

Belongs to the class-V pyridoxal-phosphate-dependent aminotransferase family. SerC subfamily. As to quaternary structure, homodimer. Requires pyridoxal 5'-phosphate as cofactor.

It is found in the cytoplasm. The enzyme catalyses O-phospho-L-serine + 2-oxoglutarate = 3-phosphooxypyruvate + L-glutamate. It catalyses the reaction 4-(phosphooxy)-L-threonine + 2-oxoglutarate = (R)-3-hydroxy-2-oxo-4-phosphooxybutanoate + L-glutamate. It functions in the pathway amino-acid biosynthesis; L-serine biosynthesis; L-serine from 3-phospho-D-glycerate: step 2/3. Its pathway is cofactor biosynthesis; pyridoxine 5'-phosphate biosynthesis; pyridoxine 5'-phosphate from D-erythrose 4-phosphate: step 3/5. Functionally, catalyzes the reversible conversion of 3-phosphohydroxypyruvate to phosphoserine and of 3-hydroxy-2-oxo-4-phosphonooxybutanoate to phosphohydroxythreonine. In Burkholderia cenocepacia (strain HI2424), this protein is Phosphoserine aminotransferase.